The sequence spans 1683 residues: Genome polyprotein (1683 aa).

Residues 1–445 are Extracellular-facing; that stretch reads MRCIGISNRD…LHQVFGAIYG (445 aa). 4 disulfide bridges follow: C3/C30, C60/C121, C74/C105, and C92/C116. N67 is a glycosylation site (N-linked (GlcNAc...) asparagine; by host). The segment at 98 to 111 is fusion peptide; that stretch reads DRGWGNGCGLFGKG. N153 carries N-linked (GlcNAc...) asparagine; by host glycosylation. 2 disulfide bridges follow: C185–C285 and C302–C333. Residues 446–466 traverse the membrane as a helical segment; that stretch reads AAFSGVSWTMKILIGVIITWI. Residues 467-472 are Cytoplasmic-facing; that stretch reads GMNSRS. The helical transmembrane segment at 473–493 threads the bilayer; that stretch reads TSLSVSLVLVGIVTLYLGVMV. The Extracellular portion of the chain corresponds to 494 to 915; that stretch reads QADSGCVVSW…MVGATMTDDI (422 aa). 6 disulfides stabilise this stretch: C499–C510, C550–C638, C674–C718, C775–C824, C786–C808, and C807–C811. A glycan (N-linked (GlcNAc...) asparagine; by host) is linked at N702. The chain crosses the membrane as a helical span at residues 916-940; sequence GMGVTYLALLAAFRVRPTFAAGLLL. The Cytoplasmic segment spans residues 941–946; it reads RKLTSK. The helical transmembrane segment at 947-965 threads the bilayer; that stretch reads ELMMTTIGIVLLSQSSIPE. The Lumenal portion of the chain corresponds to 966-989; that stretch reads TILELTDALALGMMVLKMVRNMEK. A helical membrane pass occupies residues 990-1010; sequence YQLAVTIMAILCVPNAVILQN. A topological domain (cytoplasmic) is located at residue A1011. Residues 1012-1030 traverse the membrane as a helical segment; it reads WKVSCTILAVVSVSPLLLT. Residues 1031–1037 are Lumenal-facing; sequence SSQQKAD. Residues 1038-1058 form a helical membrane-spanning segment; that stretch reads WIPLALTIKGLNPTAIFLTTL. At 1059–1683 the chain is on the cytoplasmic side; that stretch reads SRTSKKRAGV…EFKEFAAGRK (625 aa). The Peptidase S7 domain maps to 1066–1243; sequence AGVLWDVPSP…EKSIEDNPEI (178 aa). Active-site charge relay system; for serine protease NS3 activity residues include H1116, D1140, and S1200. Residues 1245-1401 enclose the Helicase ATP-binding domain; it reads DDIFRKRRLT…QSNAPIMDEE (157 aa). Positions 1249–1252 are important for RNA-binding; it reads RKRR. Position 1258 to 1265 (1258 to 1265) interacts with ATP; that stretch reads LHPGAGKT. The short motif at 1349-1352 is the DEAH box element; the sequence is DEAH. A Helicase C-terminal domain is found at 1411–1582; the sequence is SGHEWVTDFK…IFEPEREKVD (172 aa).

As to quaternary structure, capsid protein C: Homodimer. Interacts (via N-terminus) with host EXOC1 (via C-terminus); this interaction results in EXOC1 degradation through the proteasome degradation pathway. Protein prM: Forms heterodimers with envelope protein E in the endoplasmic reticulum and Golgi. Homodimer; in the endoplasmic reticulum and Golgi. Interacts with protein prM. Interacts with non-structural protein 1. In terms of assembly, homodimer; Homohexamer when secreted. Interacts with envelope protein E. As to quaternary structure, interacts (via N-terminus) with serine protease NS3. Non-structural protein 2B: Forms a heterodimer with serine protease NS3. May form homooligomers. Forms a heterodimer with NS2B. Interacts with NS4B. Interacts with unphosphorylated RNA-directed RNA polymerase NS5; this interaction stimulates RNA-directed RNA polymerase NS5 guanylyltransferase activity. Interacts with host SHFL. In terms of processing, specific enzymatic cleavages in vivo yield mature proteins. Cleavages in the lumen of endoplasmic reticulum are performed by host signal peptidase, wereas cleavages in the cytoplasmic side are performed by the Serine protease NS3. Signal cleavage at the 2K-4B site requires a prior NS3 protease-mediated cleavage at the 4A-2K site. Post-translationally, N-glycosylated. The excreted form is glycosylated and this is required for efficient secretion of the protein from infected cells. N-glycosylated. In terms of processing, specific enzymatic cleavages in vivo yield mature proteins. Cleavages in the lumen of endoplasmic reticulum are performed by host signal peptidase, wereas cleavages in the cytoplasmic side are performed by serine protease NS3. Signal cleavage at the 2K-4B site requires a prior NS3 protease-mediated cleavage at the 4A-2K site.

It is found in the virion membrane. The protein resides in the host endoplasmic reticulum membrane. It localises to the secreted. It carries out the reaction Selective hydrolysis of -Xaa-Xaa-|-Yaa- bonds in which each of the Xaa can be either Arg or Lys and Yaa can be either Ser or Ala.. The catalysed reaction is a ribonucleoside 5'-triphosphate + H2O = a ribonucleoside 5'-diphosphate + phosphate + H(+). It catalyses the reaction ATP + H2O = ADP + phosphate + H(+). Functionally, binds to host cell surface receptor and mediates fusion between viral and cellular membranes. Envelope protein is synthesized in the endoplasmic reticulum in the form of heterodimer with protein prM. They play a role in virion budding in the ER, and the newly formed immature particle is covered with 60 spikes composed of heterodimer between precursor prM and envelope protein E. The virion is transported to the Golgi apparatus where the low pH causes dissociation of PrM-E heterodimers and formation of E homodimers. prM-E cleavage is inefficient, and many virions are only partially matured. These uncleaved prM would play a role in immune evasion. Involved in immune evasion, pathogenesis and viral replication. Once cleaved off the polyprotein, is targeted to three destinations: the viral replication cycle, the plasma membrane and the extracellular compartment. Essential for viral replication. Required for formation of the replication complex and recruitment of other non-structural proteins to the ER-derived membrane structures. Excreted as a hexameric lipoparticle that plays a role against host immune response. Antagonizing the complement function. Binds to the host macrophages and dendritic cells. Inhibits signal transduction originating from Toll-like receptor 3 (TLR3). Its function is as follows. Disrupts the host endothelial glycocalyx layer of host pulmonary microvascular endothelial cells, inducing degradation of sialic acid and shedding of heparan sulfate proteoglycans. NS1 induces expression of sialidases, heparanase, and activates cathepsin L, which activates heparanase via enzymatic cleavage. These effects are probably linked to the endothelial hyperpermeability observed in severe dengue disease. In terms of biological role, component of the viral RNA replication complex that functions in virion assembly and antagonizes the host immune response. Functionally, serine protease subunit NS2B: Required cofactor for the serine protease function of NS3. May have membrane-destabilizing activity and form viroporins. Displays three enzymatic activities: serine protease, NTPase and RNA helicase. NS3 serine protease, in association with NS2B, performs its autocleavage and cleaves the polyprotein at dibasic sites in the cytoplasm: C-prM, NS2A-NS2B, NS2B-NS3, NS3-NS4A, NS4A-2K and NS4B-NS5. NS3 RNA helicase binds RNA and unwinds dsRNA in the 3' to 5' direction. This Aedimorphus (Red guenon) protein is Genome polyprotein.